We begin with the raw amino-acid sequence, 360 residues long: Peptide chain release factor 1 (360 aa).

Gln234 carries the post-translational modification N5-methylglutamine. Positions 285–305 are disordered; the sequence is RAQGIAEDRKSQVGTGDRSER.

It belongs to the prokaryotic/mitochondrial release factor family. Post-translationally, methylated by PrmC. Methylation increases the termination efficiency of RF1.

The protein resides in the cytoplasm. Functionally, peptide chain release factor 1 directs the termination of translation in response to the peptide chain termination codons UAG and UAA. This chain is Peptide chain release factor 1, found in Clostridium beijerinckii (strain ATCC 51743 / NCIMB 8052) (Clostridium acetobutylicum).